The chain runs to 385 residues: 8-amino-7-oxononanoate synthase (385 aa).

Arginine 21 is a binding site for substrate. Glycine 108–phenylalanine 109 lines the pyridoxal 5'-phosphate pocket. Residue histidine 133 participates in substrate binding. Residues serine 179, histidine 207, and threonine 233 each contribute to the pyridoxal 5'-phosphate site. Position 236 is an N6-(pyridoxal phosphate)lysine (lysine 236). Threonine 352 is a substrate binding site.

The protein belongs to the class-II pyridoxal-phosphate-dependent aminotransferase family. BioF subfamily. Homodimer. Pyridoxal 5'-phosphate serves as cofactor.

It catalyses the reaction 6-carboxyhexanoyl-[ACP] + L-alanine + H(+) = (8S)-8-amino-7-oxononanoate + holo-[ACP] + CO2. Its pathway is cofactor biosynthesis; biotin biosynthesis. Functionally, catalyzes the decarboxylative condensation of pimeloyl-[acyl-carrier protein] and L-alanine to produce 8-amino-7-oxononanoate (AON), [acyl-carrier protein], and carbon dioxide. In Klebsiella pneumoniae subsp. pneumoniae (strain ATCC 700721 / MGH 78578), this protein is 8-amino-7-oxononanoate synthase.